Reading from the N-terminus, the 206-residue chain is MGGKWSKSRMGGWSTIRERMRRAEPVAEGVGAVSRDLDRRGAVTINNTASTNRDAAWLEAQEDGEEVGFPVRPQVPLRPMTYKGAFDLSHFLKEKGGLDGLIYSKQRQDILDLWVYNTQGYFPDWQNYTPGPGERFPLTFGWCFKLVPVNPQEVEQANEGENNSLLHPMSLHGMEDDGREVLMWKFDSRLALTHLARVKHPEYKDC.

A lipid anchor (N-myristoyl glycine; by host) is attached at Gly2. Position 6 is a phosphoserine; by host (Ser6). The acidic; interacts with host PACS1 and PACS2; stabilizes the interaction of NEF/MHC-I with host AP1M1; necessary for MHC-I internalization stretch occupies residues Glu62–Glu66. Positions Pro70–Pro79 are SH3-binding; interaction with Src family tyrosine kinases. The PxxP; stabilizes the interaction of NEF/MHC-I with host AP1M1; necessary for MHC-I internalization signature appears at Pro73–Pro76. A mediates dimerization, Nef-PTE1 interaction region spans residues Asp109 to Trp125. A binding to ATP6V1H region spans residues Val149–Val181. The Dileucine internalization motif; necessary for CD4 internalization motif lies at Leu165–Leu166. The Diacidic; necessary for CD4 internalization signature appears at Glu175–Asp176.

This sequence belongs to the lentivirus primate group Nef protein family. In terms of assembly, monomer; cytosolic form. Homodimer; membrane bound form. Interacts with Nef associated p21-activated kinase (PAK2); this interaction activates PAK2. Associates with the Nef-MHC-I-AP1 complex; this complex is required for MHC-I internalization. Interacts (via C-terminus) with host PI3-kinase. Interacts with host PACS1; this interaction seems to be weak. Interacts with host PACS2. Interacts with host LCK and MAPK3; these interactions inhibit the kinase activity of the latter. Interacts with host ATP6V1H; this interaction may play a role in CD4 endocytosis. Associates with the CD4-Nef-AP2 complex; this complex is required for CD4 internalization. Interacts with host AP2 subunit alpha and AP2 subunit sigma2. Interacts with TCR-zeta chain; this interaction up-regulates the Fas ligand (FasL) surface expression. Interacts with host HCK, LYN, and SRC; these interactions activate the Src family kinases. Interacts with MAP3K5; this interaction inhibits the Fas and TNFR-mediated death signals. Interacts with beta-COP and PTE1. Interacts with human RACK1; this increases Nef phosphorylation by PKC. Interacts with TP53; this interaction decreases the half-life of TP53, protecting the infected cell against p53-mediated apoptosis. Post-translationally, the virion-associated Nef proteins are cleaved by the viral protease to release the soluble C-terminal core protein. Nef is probably cleaved concomitantly with viral structural proteins on maturation of virus particles. Myristoylated. In terms of processing, phosphorylated on serine residues, probably by host PKCdelta and theta.

Its subcellular location is the host cell membrane. It localises to the virion. It is found in the secreted. The protein resides in the host Golgi apparatus membrane. In terms of biological role, factor of infectivity and pathogenicity, required for optimal virus replication. Alters numerous pathways of T-lymphocyte function and down-regulates immunity surface molecules in order to evade host defense and increase viral infectivity. Alters the functionality of other immunity cells, like dendritic cells, monocytes/macrophages and NK cells. Functionally, in infected CD4(+) T-lymphocytes, down-regulates the surface MHC-I, mature MHC-II, CD4, CD28, CCR5 and CXCR4 molecules. Mediates internalization and degradation of host CD4 through the interaction of with the cytoplasmic tail of CD4, the recruitment of AP-2 (clathrin adapter protein complex 2), internalization through clathrin coated pits, and subsequent transport to endosomes and lysosomes for degradation. Diverts host MHC-I molecules to the trans-Golgi network-associated endosomal compartments by an endocytic pathway to finally target them for degradation. MHC-I down-regulation may involve AP-1 (clathrin adapter protein complex 1) or possibly Src family kinase-ZAP70/Syk-PI3K cascade recruited by PACS2. In consequence infected cells are masked for immune recognition by cytotoxic T-lymphocytes. Decreasing the number of immune receptors also prevents reinfection by more HIV particles (superinfection). Down-regulates host SERINC3 and SERINC5 thereby excluding these proteins from the viral particles. Virion infectivity is drastically higher when SERINC3 or SERINC5 are excluded from the viral envelope, because these host antiviral proteins impair the membrane fusion event necessary for subsequent virion penetration. Bypasses host T-cell signaling by inducing a transcriptional program nearly identical to that of anti-CD3 cell activation. Interaction with TCR-zeta chain up-regulates the Fas ligand (FasL). Increasing surface FasL molecules and decreasing surface MHC-I molecules on infected CD4(+) cells send attacking cytotoxic CD8+ T-lymphocytes into apoptosis. Its function is as follows. Plays a role in optimizing the host cell environment for viral replication without causing cell death by apoptosis. Protects the infected cells from apoptosis in order to keep them alive until the next virus generation is ready to strike. Inhibits the Fas and TNFR-mediated death signals by blocking MAP3K5/ASK1. Decreases the half-life of TP53, protecting the infected cell against p53-mediated apoptosis. Inhibits the apoptotic signals regulated by the Bcl-2 family proteins through the formation of a Nef/PI3-kinase/PAK2 complex that leads to activation of PAK2 and induces phosphorylation of host BAD. In terms of biological role, extracellular Nef protein targets CD4(+) T-lymphocytes for apoptosis by interacting with CXCR4 surface receptors. In Homo sapiens (Human), this protein is Protein Nef.